The following is a 544-amino-acid chain: Protein RDR1 (544 aa).

The segment at residues 14-40 (CETCRELKRKCDGNQPCGACVRFEYDC) is a DNA-binding region (zn(2)-C6 fungal-type). The segment at 50-71 (KRRKTVEQDKEAPLPSPPVHVD) is disordered.

It localises to the nucleus. Functionally, may act as a transcriptional repressor of multidrug resistance genes. In Gibberella zeae (strain ATCC MYA-4620 / CBS 123657 / FGSC 9075 / NRRL 31084 / PH-1) (Wheat head blight fungus), this protein is Protein RDR1 (RDR1).